The primary structure comprises 447 residues: Putative metabolite transport protein HI_0418 (447 aa).

Over 1–28 the chain is Cytoplasmic; the sequence is MCKPQQKHYGRQVMNTQNSLKQVATATM. The helical transmembrane segment at 29 to 49 threads the bilayer; it reads VGTAIEYFDNYIYAMAAVLVF. Topologically, residues 50–63 are periplasmic; sequence NHQFFHAVDPLSGQ. The helical transmembrane segment at 64-84 threads the bilayer; the sequence is IAALSTLALTFIARPLGAILF. Residues 85 to 96 are Cytoplasmic-facing; that stretch reads GHFGDRFGRKNT. The chain crosses the membrane as a helical span at residues 97 to 117; the sequence is FVMSLLLMGISTVVIGLLPTY. The Periplasmic portion of the chain corresponds to 118–119; the sequence is DS. The helical transmembrane segment at 120 to 140 threads the bilayer; it reads IGIWATILLCLCRIGQGIGLG. At 141–167 the chain is on the cytoplasmic side; sequence GEWGGAALVAVENAPEGKRGWYGTFPQ. The helical transmembrane segment at 168 to 188 threads the bilayer; it reads LGAPLGLLLANGVFLGITAIF. At 189–194 the chain is on the periplasmic side; the sequence is GQEAMT. A helical membrane pass occupies residues 195 to 215; it reads EWAWRIPFLSSVILVAIGLYV. Residues 216-249 are Cytoplasmic-facing; that stretch reads RLKLTEAPIFLAALNKPKPKRLPMLEVVTTHFKP. A helical transmembrane segment spans residues 250–270; that stretch reads FFLGMLVCIAGYVLFYIMIAF. Over 271 to 295 the chain is Periplasmic; sequence SQIYAKSAPTVSEAGYAMGLGFSPQ. Residues 296 to 316 form a helical membrane-spanning segment; it reads IFTALLMASAVSLAITIAASG. Topologically, residues 317 to 325 are cytoplasmic; that stretch reads KYIDKIGRR. Residues 326 to 346 traverse the membrane as a helical segment; sequence TWLIWTTVGVAIFGLSLPLFL. The Periplasmic portion of the chain corresponds to 347–354; that stretch reads ENGTTTSL. The chain crosses the membrane as a helical span at residues 355 to 375; the sequence is FWFLFIGMGLIGMGYGPLASF. The Cytoplasmic segment spans residues 376 to 390; it reads LPELFPTHARYSGAS. A helical membrane pass occupies residues 391–411; the sequence is LTYNIAGLFGASVAAIIALPL. The Periplasmic segment spans residues 412–418; sequence NAHYGLK. The helical transmembrane segment at 419-439 threads the bilayer; that stretch reads GVGIYLTLNAVLSLVGLWFIS. Over 440–447 the chain is Cytoplasmic; the sequence is ETKDKLLS.

This sequence belongs to the major facilitator superfamily. Metabolite:H+ Symporter (MHS) family (TC 2.A.1.6) family.

The protein localises to the cell inner membrane. The chain is Putative metabolite transport protein HI_0418 from Haemophilus influenzae (strain ATCC 51907 / DSM 11121 / KW20 / Rd).